The following is a 187-amino-acid chain: Acireductone dioxygenase 4 (187 aa).

Ala-2 is modified (N-acetylalanine). Residues His-89, His-91, Glu-95, and His-134 each coordinate Fe(2+). His-89, His-91, Glu-95, and His-134 together coordinate Ni(2+).

This sequence belongs to the acireductone dioxygenase (ARD) family. It depends on Fe(2+) as a cofactor. The cofactor is Ni(2+).

It localises to the cytoplasm. Its subcellular location is the nucleus. It catalyses the reaction 1,2-dihydroxy-5-(methylsulfanyl)pent-1-en-3-one + O2 = 4-methylsulfanyl-2-oxobutanoate + formate + 2 H(+). It carries out the reaction 1,2-dihydroxy-5-(methylsulfanyl)pent-1-en-3-one + O2 = 3-(methylsulfanyl)propanoate + CO + formate + 2 H(+). It participates in amino-acid biosynthesis; L-methionine biosynthesis via salvage pathway; L-methionine from S-methyl-5-thio-alpha-D-ribose 1-phosphate: step 5/6. Catalyzes 2 different reactions between oxygen and the acireductone 1,2-dihydroxy-3-keto-5-methylthiopentene (DHK-MTPene) depending upon the metal bound in the active site. Fe-containing acireductone dioxygenase (Fe-ARD) produces formate and 2-keto-4-methylthiobutyrate (KMTB), the alpha-ketoacid precursor of methionine in the methionine recycle pathway. Ni-containing acireductone dioxygenase (Ni-ARD) produces methylthiopropionate, carbon monoxide and formate, and does not lie on the methionine recycle pathway. The protein is Acireductone dioxygenase 4 (ARD4) of Arabidopsis thaliana (Mouse-ear cress).